The sequence spans 320 residues: Putative fatty acid elongase 3 (320 aa).

Asn14 carries an N-linked (GlcNAc...) asparagine glycan. 6 helical membrane-spanning segments follow: residues Trp33–Phe53, Leu67–Leu87, Phe120–Val140, Pro145–Tyr165, Met203–Val223, and Leu242–His262.

This sequence belongs to the ELO family.

Its subcellular location is the membrane. It carries out the reaction a very-long-chain acyl-CoA + malonyl-CoA + H(+) = a very-long-chain 3-oxoacyl-CoA + CO2 + CoA. Its pathway is lipid metabolism; fatty acid biosynthesis. Functionally, could be implicated in synthesis of very long chain fatty acids. May be required for normally rapid growth. This Caenorhabditis elegans protein is Putative fatty acid elongase 3 (elo-3).